Consider the following 155-residue polypeptide: SsrA-binding protein (155 aa).

The interval 136–155 is disordered; it reads RESLKRRQDQRDMQRAMKNY.

It belongs to the SmpB family.

It is found in the cytoplasm. Required for rescue of stalled ribosomes mediated by trans-translation. Binds to transfer-messenger RNA (tmRNA), required for stable association of tmRNA with ribosomes. tmRNA and SmpB together mimic tRNA shape, replacing the anticodon stem-loop with SmpB. tmRNA is encoded by the ssrA gene; the 2 termini fold to resemble tRNA(Ala) and it encodes a 'tag peptide', a short internal open reading frame. During trans-translation Ala-aminoacylated tmRNA acts like a tRNA, entering the A-site of stalled ribosomes, displacing the stalled mRNA. The ribosome then switches to translate the ORF on the tmRNA; the nascent peptide is terminated with the 'tag peptide' encoded by the tmRNA and targeted for degradation. The ribosome is freed to recommence translation, which seems to be the essential function of trans-translation. The sequence is that of SsrA-binding protein from Nostoc sp. (strain PCC 7120 / SAG 25.82 / UTEX 2576).